Here is a 163-residue protein sequence, read N- to C-terminus: Nucleotide-binding protein HSM_1099 (163 aa).

Belongs to the YajQ family.

Its function is as follows. Nucleotide-binding protein. This is Nucleotide-binding protein HSM_1099 from Histophilus somni (strain 2336) (Haemophilus somnus).